The following is a 239-amino-acid chain: Ribonuclease PH (239 aa).

Phosphate is bound by residues Arg-87 and 125–127; that span reads GTR.

Belongs to the RNase PH family. Homohexameric ring arranged as a trimer of dimers.

The enzyme catalyses tRNA(n+1) + phosphate = tRNA(n) + a ribonucleoside 5'-diphosphate. Functionally, phosphorolytic 3'-5' exoribonuclease that plays an important role in tRNA 3'-end maturation. Removes nucleotide residues following the 3'-CCA terminus of tRNAs; can also add nucleotides to the ends of RNA molecules by using nucleoside diphosphates as substrates, but this may not be physiologically important. Probably plays a role in initiation of 16S rRNA degradation (leading to ribosome degradation) during starvation. The polypeptide is Ribonuclease PH (Syntrophomonas wolfei subsp. wolfei (strain DSM 2245B / Goettingen)).